The primary structure comprises 123 residues: Large ribosomal subunit protein bL12 (123 aa).

The protein belongs to the bacterial ribosomal protein bL12 family. As to quaternary structure, homodimer. Part of the ribosomal stalk of the 50S ribosomal subunit. Forms a multimeric L10(L12)X complex, where L10 forms an elongated spine to which 2 to 4 L12 dimers bind in a sequential fashion. Binds GTP-bound translation factors.

Forms part of the ribosomal stalk which helps the ribosome interact with GTP-bound translation factors. Is thus essential for accurate translation. The sequence is that of Large ribosomal subunit protein bL12 from Laribacter hongkongensis (strain HLHK9).